The sequence spans 460 residues: ATP synthase subunit beta (460 aa).

150-157 is an ATP binding site; it reads GGAGVGKT.

It belongs to the ATPase alpha/beta chains family. F-type ATPases have 2 components, CF(1) - the catalytic core - and CF(0) - the membrane proton channel. CF(1) has five subunits: alpha(3), beta(3), gamma(1), delta(1), epsilon(1). CF(0) has three main subunits: a(1), b(2) and c(9-12). The alpha and beta chains form an alternating ring which encloses part of the gamma chain. CF(1) is attached to CF(0) by a central stalk formed by the gamma and epsilon chains, while a peripheral stalk is formed by the delta and b chains.

It is found in the cell inner membrane. The catalysed reaction is ATP + H2O + 4 H(+)(in) = ADP + phosphate + 5 H(+)(out). Functionally, produces ATP from ADP in the presence of a proton gradient across the membrane. The catalytic sites are hosted primarily by the beta subunits. The sequence is that of ATP synthase subunit beta from Edwardsiella ictaluri (strain 93-146).